We begin with the raw amino-acid sequence, 103 residues long: Potassium voltage-gated channel subfamily E member 3 (103 aa).

Asparagine 5, asparagine 22, and asparagine 41 each carry an N-linked (GlcNAc...) asparagine glycan. The segment at 30–52 (LCRPGPGPGPDNQTEDRRASLPG) is disordered. A helical transmembrane segment spans residues 57 to 77 (SYMYILFVMFLFAVTVGSLIL). An interaction with KCNQ1 region spans residues 68 to 79 (FAVTVGSLILGY). Over 78–103 (GYTRSRKVDKRSDPYHVYIKNRVSMI) the chain is Cytoplasmic.

This sequence belongs to the potassium channel KCNE family. As to quaternary structure, interacts with KCNB1. Interacts with KCNC2. Associates with KCNC4/Kv3.4. Interacts with KCNQ1; associates with a KCNQ1:KCNE3 stoichiometry of 4:4; produces a current with nearly instantaneous activation with a linear current-voltage relationship and alters membrane raft localization; affects KCNQ1 structure and gating properties.

It is found in the cell membrane. It localises to the cytoplasm. The protein localises to the perikaryon. The protein resides in the cell projection. Its subcellular location is the dendrite. It is found in the membrane raft. Ancillary protein that functions as a regulatory subunit of the voltage-gated potassium (Kv) channel complex composed of pore-forming and potassium-conducting alpha subunits and of regulatory beta subunits. KCNE3 beta subunit modulates the gating kinetics and enhances stability of the channel complex. Alters the gating of the delayed rectifier Kv channel containing KCNB1 alpha subunit. Associates with KCNC4/Kv3.4 alpha subunit to form the subthreshold Kv channel in skeletal muscle and to establish the resting membrane potential (RMP) in muscle cells. Association with KCNQ1/KCLQT1 alpha subunit may form the intestinal cAMP-stimulated potassium channel involved in chloride secretion that produces a current with nearly instantaneous activation with a linear current-voltage relationship. The polypeptide is Potassium voltage-gated channel subfamily E member 3 (Mus musculus (Mouse)).